The sequence spans 216 residues: LexA repressor (216 aa).

Residues Arg28–Arg48 constitute a DNA-binding region (H-T-H motif). Active-site for autocatalytic cleavage activity residues include Ser134 and Lys171.

This sequence belongs to the peptidase S24 family. As to quaternary structure, homodimer.

It catalyses the reaction Hydrolysis of Ala-|-Gly bond in repressor LexA.. In terms of biological role, represses a number of genes involved in the response to DNA damage (SOS response), including recA and lexA. In the presence of single-stranded DNA, RecA interacts with LexA causing an autocatalytic cleavage which disrupts the DNA-binding part of LexA, leading to derepression of the SOS regulon and eventually DNA repair. This Paraburkholderia phytofirmans (strain DSM 17436 / LMG 22146 / PsJN) (Burkholderia phytofirmans) protein is LexA repressor.